Here is a 2464-residue protein sequence, read N- to C-terminus: Nonribosomal peptide synthetase NPS2 (2464 aa).

An adenylation 1 region spans residues 275–670 (DDHHPGTSQP…GRIDTQIKLR (396 aa)). Residues 814–888 (TKAEGQLLEI…QIAKALDASS (75 aa)) form the Carrier 1 domain. At serine 848 the chain carries O-(pantetheine 4'-phosphoryl)serine. The condensation 1 stretch occupies residues 924 to 1325 (IYPPFPLQEG…EGLALDLAQG (402 aa)). A Carrier 2 domain is found at 1364-1437 (EDLLLRLRKI…RMAASAGKKI (74 aa)). Serine 1398 carries the post-translational modification O-(pantetheine 4'-phosphoryl)serine. Positions 1479–1887 (DVFPVTTLQA…LRVLVDDLDA (409 aa)) are condensation 2. The 77-residue stretch at 1917–1993 (SSWDEKSSTL…DLVMRAGAED (77 aa)) folds into the Carrier 3 domain. Serine 1954 is modified (O-(pantetheine 4'-phosphoryl)serine). A condensation 3 region spans residues 2047 to 2340 (GGSRYQHVFG…ATQIQDDLRE (294 aa)).

This sequence belongs to the NRP synthetase family.

Its pathway is siderophore biosynthesis. Functionally, nonribosomal peptide synthetase; part of the siderophore basidioferrin biosynthetic pathway. The biosynthesis of basidioferrin depends on the hydroxylation of ornithine to N(5)-hydroxyornithine, catalyzed by the monooxygenase SMO1. The second step, the acylation of N(5)-hydroxy-L-ornithine is catalyzed by a not yet identified N-acyltransferase. Finally, assembly of basidioferrin is catalyzed by the nonribosomal peptide synthase (NRPS) NPS2 via amide bond formation between three L-AHO molecules to release the linear L-AHO trimer. N-5-acetyl-N-5-hydroxy-L-ornithine (L-AHO) and N-5-cis-anhydromevalonyl-N-5-hydroxy-L-ornithine (L-AMHO) are accepted as the substrates by the NPS2 adenylation (A) domain, but only L-AHO is trimerized. This is Nonribosomal peptide synthetase NPS2 from Ceriporiopsis subvermispora (strain B) (White-rot fungus).